Consider the following 92-residue polypeptide: Long neurotoxin 469 (92 aa).

The first 21 residues, 1-21 (MKTLLLTLVVVTIVCLDLGDS), serve as a signal peptide directing secretion. 5 disulfide bridges follow: cysteine 24–cysteine 41, cysteine 34–cysteine 62, cysteine 47–cysteine 51, cysteine 66–cysteine 77, and cysteine 78–cysteine 83.

The protein belongs to the three-finger toxin family. Long-chain subfamily. Type II alpha-neurotoxin sub-subfamily. Expressed by the venom gland.

Its subcellular location is the secreted. Functionally, binds with high affinity to muscular (alpha-1/CHRNA1) and neuronal (alpha-7/CHRNA7) nicotinic acetylcholine receptor (nAChR) and inhibits acetylcholine from binding to the receptor, thereby impairing neuromuscular and neuronal transmission. The sequence is that of Long neurotoxin 469 from Drysdalia coronoides (White-lipped snake).